Reading from the N-terminus, the 956-residue chain is Netrin receptor UNC5D (956 aa).

The signal sequence occupies residues 1–30 (MGTGAADRSRGARWWLPWLGLCFWAAGAEA). The Extracellular segment spans residues 31–382 (ARGADSGEVL…SRRGIENASD (352 aa)). The 98-residue stretch at 52 to 149 (PHFIEEPEDA…LGTSKSRKAS (98 aa)) folds into the Ig-like domain. Disulfide bonds link C73-C134, C85-C132, C178-C229, C262-C299, C266-C303, C277-C289, C318-C352, C322-C357, and C330-C342. Residues 89 to 91 (WVH) are important for interaction with FLRT2. N-linked (GlcNAc...) asparagine glycans are attached at residues N115 and N226. An Ig-like C2-type domain is found at 164–242 (QGREVPIEGM…NIVAKRRSLS (79 aa)). TSP type-1 domains are found at residues 250-304 (NGGW…ALCP) and 306-358 (DGSW…GLCI). Residues 383 to 403 (IALYSGLGAAVVAVAVLVIGV) traverse the membrane as a helical segment. Residues 404-956 (TLYRRSHSDY…DFNYSRQNGL (553 aa)) lie on the Cytoplasmic side of the membrane. A ZU5 domain is found at 545-685 (LRTTGVFGHL…FGTYALTGEP (141 aa)). The Death domain maps to 862-939 (QRICATFDTP…RTHTKLSNIT (78 aa)).

This sequence belongs to the unc-5 family. As to quaternary structure, interacts (via extracellular domain) with FLRT2 and FLRT3 (via extracellular domain); the interaction is direct. Has higher affinity for FLRT2. Identified in a complex with FLRT3 and ADGRL3; does not interact with ADGRL3 by itself. In terms of processing, proteolytically cleaved by caspases during apoptosis. The cleavage does not take place when the receptor is associated with netrin ligand. Its cleavage by caspases is required to induce apoptosis.

The protein resides in the cell membrane. In terms of biological role, receptor for the netrin NTN4 that promotes neuronal cell survival. Plays a role in cell-cell adhesion and cell guidance. Receptor for netrin involved in cell migration. Plays a role in axon guidance by mediating axon repulsion of neuronal growth cones in the developing nervous system upon ligand binding. May play a role in apoptosis in response to DNA damage. It also acts as a dependence receptor required for apoptosis induction when not associated with netrin ligand. Mediates cell-cell adhesion via its interaction with FLRT3 on an adjacent cell. The polypeptide is Netrin receptor UNC5D (Rattus norvegicus (Rat)).